The chain runs to 438 residues: Protein translocase subunit SecY (438 aa).

The chain crosses the membrane as a helical span at residues 1–43 (MKIKPILELIPEVKRPLKGVSFKEKIQWTGLVLILYFILGTID). Topologically, residues 44 to 54 (IYMGGAEMPAM) are extracellular. Residues 55–62 (FAFWQTVT) constitute an intramembrane region (helical). Residues 55-83 (FAFWQTVTASKMGTLITLGIGPIVTAGII) traverse the membrane as a discontinuously helical segment. Residues 63-74 (ASKMGTLITLGI) lie within the membrane without spanning it. The helical intramembrane region spans 75-83 (GPIVTAGII). Residues 84 to 104 (MQLLVGSELISLDLSKPMNRA) are Cytoplasmic-facing. Residues 105-129 (LFQGLQKLFGIFLCFLEAVMFVGAG) form a helical membrane-spanning segment. Over 130–136 (AFGVVNS) the chain is Extracellular. The helical transmembrane segment at 137-161 (TLALILVLQLALGAILVIYLDEIVS) threads the bilayer. The Cytoplasmic portion of the chain corresponds to 162–167 (RYGIGS). Residues 168–186 (GIGLFIAAGVAQTIFVGAF) form a helical membrane-spanning segment. Over 187–209 (GAEGYLWKFFSAMSVGSLGIAFE) the chain is Extracellular. A helical transmembrane segment spans residues 210 to 231 (YILPILSTLFVFLVVVYVESIR). The Cytoplasmic portion of the chain corresponds to 232 to 256 (VEIPLAHGRVKGAVGKYPIKFIYVS). Residues 257 to 278 (NLPVILAAALFANIQLWGMFLD) traverse the membrane as a helical segment. The Extracellular segment spans residues 279-315 (RMGYPILGQYSNGTAVSGIAYYFSTPYGISNIISDPL). Residues 316–335 (HAIFYTLMMVIFCILFGLFW) form a helical membrane-spanning segment. At 336–378 (VETSGLDAKSMAKKLGNLDMAIKGFRKSQKSIEQRLKRYIKPI) the chain is on the cytoplasmic side. The chain crosses the membrane as a helical span at residues 379–397 (TVMGSAFVGFLAAAADFTG). The Extracellular portion of the chain corresponds to 398 to 400 (ALG). A helical membrane pass occupies residues 401-415 (GGTGVLLTVSIVYRL). At 416 to 438 (YEQLVQEQLSELHPAVAKFVGKR) the chain is on the cytoplasmic side.

The protein belongs to the SecY/SEC61-alpha family. As to quaternary structure, component of the Sec protein translocase complex. Heterotrimer consisting of alpha (SecY), beta (SecG) and gamma (SecE) subunits. The heterotrimers can form oligomers, although 1 heterotrimer is thought to be able to translocate proteins. Interacts with the ribosome. May interact with SecDF, and other proteins may be involved.

Its subcellular location is the cell membrane. In terms of biological role, the central subunit of the protein translocation channel SecYEG. Consists of two halves formed by TMs 1-5 and 6-10. These two domains form a lateral gate at the front which open onto the bilayer between TMs 2 and 7, and are clamped together by SecE at the back. The channel is closed by both a pore ring composed of hydrophobic SecY resides and a short helix (helix 2A) on the extracellular side of the membrane which forms a plug. The plug probably moves laterally to allow the channel to open. The ring and the pore may move independently. This is Protein translocase subunit SecY from Methanococcus vannielii.